We begin with the raw amino-acid sequence, 92 residues long: MANTTSAKKATRKIARRTDVNKARRSRVRTFVRQVEEAIASGDADKAKAAFLAAQPELARAASKGVLHSNTASRKVSRLAARVKALSVSPTA.

The interval 1-24 (MANTTSAKKATRKIARRTDVNKAR) is disordered.

This sequence belongs to the bacterial ribosomal protein bS20 family.

In terms of biological role, binds directly to 16S ribosomal RNA. The chain is Small ribosomal subunit protein bS20 from Rhizobium etli (strain ATCC 51251 / DSM 11541 / JCM 21823 / NBRC 15573 / CFN 42).